The sequence spans 94 residues: DNA-directed RNA polymerase subunit omega (94 aa).

Belongs to the RNA polymerase subunit omega family. As to quaternary structure, the RNAP catalytic core consists of 2 alpha, 1 beta, 1 beta' and 1 omega subunit. When a sigma factor is associated with the core the holoenzyme is formed, which can initiate transcription.

It catalyses the reaction RNA(n) + a ribonucleoside 5'-triphosphate = RNA(n+1) + diphosphate. In terms of biological role, promotes RNA polymerase assembly. Latches the N- and C-terminal regions of the beta' subunit thereby facilitating its interaction with the beta and alpha subunits. The protein is DNA-directed RNA polymerase subunit omega of Tolumonas auensis (strain DSM 9187 / NBRC 110442 / TA 4).